The following is a 337-amino-acid chain: Pentalenene synthase (337 aa).

Residues D80, D84, N219, S223, and E227 each contribute to the Mg(2+) site. The short motif at 80–84 (DDLFD) is the DDXXD motif element.

Belongs to the terpene synthase family. As to quaternary structure, monomer. Mg(2+) serves as cofactor.

It carries out the reaction (2E,6E)-farnesyl diphosphate = pentalenene + diphosphate. Its pathway is sesquiterpene biosynthesis; pentalenene biosynthesis; pentalenene from farnesyl diphosphate: step 1/1. It functions in the pathway antibiotic biosynthesis; pentalenolactone biosynthesis. Its function is as follows. Catalyzes the cyclization of farnesyl diphosphate (FPP) to the tricyclic sesquiterpene pentalenene, which is the hydrocarbon precursor of the pentalenolactone family of antibiotics produced by a variety of Streptomyces species. In Streptomyces arenae, this protein is Pentalenene synthase (pntA).